The sequence spans 144 residues: Large ribosomal subunit protein uL13 (144 aa).

The protein belongs to the universal ribosomal protein uL13 family. As to quaternary structure, part of the 50S ribosomal subunit.

Functionally, this protein is one of the early assembly proteins of the 50S ribosomal subunit, although it is not seen to bind rRNA by itself. It is important during the early stages of 50S assembly. This chain is Large ribosomal subunit protein uL13, found in Ruminiclostridium cellulolyticum (strain ATCC 35319 / DSM 5812 / JCM 6584 / H10) (Clostridium cellulolyticum).